Here is a 425-residue protein sequence, read N- to C-terminus: Serine hydroxymethyltransferase (425 aa).

(6S)-5,6,7,8-tetrahydrofolate is bound by residues L128 and 132–134 (GHL). At K237 the chain carries N6-(pyridoxal phosphate)lysine.

It belongs to the SHMT family. As to quaternary structure, homodimer. Requires pyridoxal 5'-phosphate as cofactor.

The protein resides in the cytoplasm. The enzyme catalyses (6R)-5,10-methylene-5,6,7,8-tetrahydrofolate + glycine + H2O = (6S)-5,6,7,8-tetrahydrofolate + L-serine. Its pathway is one-carbon metabolism; tetrahydrofolate interconversion. It functions in the pathway amino-acid biosynthesis; glycine biosynthesis; glycine from L-serine: step 1/1. Functionally, catalyzes the reversible interconversion of serine and glycine with tetrahydrofolate (THF) serving as the one-carbon carrier. This reaction serves as the major source of one-carbon groups required for the biosynthesis of purines, thymidylate, methionine, and other important biomolecules. Also exhibits THF-independent aldolase activity toward beta-hydroxyamino acids, producing glycine and aldehydes, via a retro-aldol mechanism. The chain is Serine hydroxymethyltransferase from Wolbachia pipientis subsp. Culex pipiens (strain wPip).